Consider the following 354-residue polypeptide: DNA integrity scanning protein DisA (354 aa).

One can recognise a DAC domain in the interval 6-144; it reads DDELKKILKI…GDIKYVLRDS (139 aa). ATP contacts are provided by residues Gly-73, Leu-91, and 104 to 108; that span reads TRHRT.

The protein belongs to the DisA family. In terms of assembly, homooctamer. Mg(2+) serves as cofactor.

The enzyme catalyses 2 ATP = 3',3'-c-di-AMP + 2 diphosphate. Its function is as follows. Participates in a DNA-damage check-point that is active prior to asymmetric division when DNA is damaged. DisA forms globular foci that rapidly scan along the chromosomes during sporulation, searching for lesions. When a lesion is present, DisA pauses at the lesion site. This triggers a cellular response that culminates in a temporary block in sporulation initiation. Also has diadenylate cyclase activity, catalyzing the condensation of 2 ATP molecules into cyclic di-AMP (c-di-AMP). c-di-AMP acts as a signaling molecule that couples DNA integrity with progression of sporulation. The rise in c-di-AMP level generated by DisA while scanning the chromosome, operates as a positive signal that advances sporulation; upon encountering a lesion, the DisA focus arrests at the damaged site and halts c-di-AMP synthesis. The sequence is that of DNA integrity scanning protein DisA from Clostridium perfringens (strain SM101 / Type A).